The chain runs to 189 residues: Apolipophorin-3 (189 aa).

The signal sequence occupies residues 1-18 (MAAKFVVVLAACVALSHS). A propeptide spanning residues 19-23 (AMVRR) is cleaved from the precursor.

It belongs to the insect apolipophorin-3 family. In terms of assembly, equilibrium between a soluble monomer and a bound lipoprotein form. Apolipophorin-3 associates with lipophorin during lipid loading until each particle contains 9 or 14 molecules of apolipophorin-3. Hemolymph.

The protein localises to the secreted. Functionally, assists in the loading of diacylglycerol, generated from triacylglycerol stores in the fat body through the action of adipokinetic hormone, into lipophorin, the hemolymph lipoprotein. It increases the lipid carrying capacity of lipophorin by covering the expanding hydrophobic surface resulting from diacylglycerol uptake. It thus plays a critical role in the transport of lipids during flight in several species of insects. This chain is Apolipophorin-3, found in Manduca sexta (Tobacco hawkmoth).